We begin with the raw amino-acid sequence, 1171 residues long: DNA-directed RNA polymerase subunit beta (1171 aa).

It belongs to the RNA polymerase beta chain family. As to quaternary structure, the RNAP catalytic core consists of 2 alpha, 1 beta, 1 beta' and 1 omega subunit. When a sigma factor is associated with the core the holoenzyme is formed, which can initiate transcription.

The catalysed reaction is RNA(n) + a ribonucleoside 5'-triphosphate = RNA(n+1) + diphosphate. DNA-dependent RNA polymerase catalyzes the transcription of DNA into RNA using the four ribonucleoside triphosphates as substrates. In Corynebacterium efficiens (strain DSM 44549 / YS-314 / AJ 12310 / JCM 11189 / NBRC 100395), this protein is DNA-directed RNA polymerase subunit beta.